The chain runs to 443 residues: MTKVAIIGAGPCGLSALRSFEQAEKNGEKIPEIVCFDKQEDWGGLWNYSWRTGSDQYGDPVPNSMYRYLWSNGPKECLEFADYSFDEHFGKPIPSFPPREVLYNYILGRVKKGNLKSKIKFNTTVTNVSYDNENFEVTYRDKKNDKISKDIFDYVIVSTGHFSVPFIPEYPGMKAFPGRIMHSHDFRDAEEFRGKNVVVLGSSYSAEDVALQCHKYGAKSVTIGYRHNPMGFKWPEGMKEVFHLDRLEGNKAIFKDGHVQETDAVILCTGYLHHFPFMSEDLKLKTGNRLYPPMLYKGVVWQNNHKLMYLGMQDQFHTFNMFDCQAWFARDVIMGKIKTPNDSEIEKDINKWVSMEEKLENADQMIDFQTEYTKELHELSDYPKIDFELIRKTFKEWEHHKVENIMTYRNKSFASPVTGSVGPIHHTPWEEAMDDSLKTFLNK.

FAD contacts are provided by D37, Q39, L45, and W46. Residues W70 and N72 each coordinate NADP(+). FAD-binding residues include N72 and V125. NADP(+) contacts are provided by Y170, S202, S203, S205, and R226. Positions 315 and 318 each coordinate FAD. R409 contributes to the NADP(+) binding site.

This sequence belongs to the FMO family. FAD serves as cofactor.

It catalyses the reaction trimethylamine + NADPH + O2 = trimethylamine N-oxide + NADP(+) + H2O. Functionally, catalyzes the oxidation of trimethylamine (TMA) to produce trimethylamine N-oxide (TMAO). In vitro, has a broad substrate specificity, oxidizing many nitrogen- and sulfur-containing compounds, including dimethylamine (DMA), dimethylsulfide (DMS) and dimethylsulfoxide (DMSO). This is Trimethylamine monooxygenase from Pelagibacter ubique (strain HTCC1002).